Consider the following 168-residue polypeptide: G/U mismatch-specific DNA glycosylase (168 aa).

Belongs to the uracil-DNA glycosylase (UDG) superfamily. TDG/mug family. As to quaternary structure, binds DNA as a monomer.

Its subcellular location is the cytoplasm. The enzyme catalyses Specifically hydrolyzes mismatched double-stranded DNA and polynucleotides, releasing free uracil.. In terms of biological role, excises ethenocytosine and uracil, which can arise by alkylation or deamination of cytosine, respectively, from the corresponding mispairs with guanine in ds-DNA. It is capable of hydrolyzing the carbon-nitrogen bond between the sugar-phosphate backbone of the DNA and the mispaired base. The complementary strand guanine functions in substrate recognition. Required for DNA damage lesion repair in stationary-phase cells. This is G/U mismatch-specific DNA glycosylase from Escherichia fergusonii (strain ATCC 35469 / DSM 13698 / CCUG 18766 / IAM 14443 / JCM 21226 / LMG 7866 / NBRC 102419 / NCTC 12128 / CDC 0568-73).